A 258-amino-acid polypeptide reads, in one-letter code: Dihydroorotate dehydrogenase B (NAD(+)), electron transfer subunit (258 aa).

Residues 2 to 100 enclose the FAD-binding FR-type domain; it reads ILKENLTVVS…LGPQGNGFDL (99 aa). Residues 51-54, 68-70, and 75-76 contribute to the FAD site; these read RPIS, IYR, and GT. [2Fe-2S] cluster is bound by residues Cys-220, Cys-225, Cys-228, and Cys-244.

It belongs to the PyrK family. In terms of assembly, heterotetramer of 2 PyrK and 2 PyrD type B subunits. Requires [2Fe-2S] cluster as cofactor. FAD serves as cofactor.

Its pathway is pyrimidine metabolism; UMP biosynthesis via de novo pathway; orotate from (S)-dihydroorotate (NAD(+) route): step 1/1. In terms of biological role, responsible for channeling the electrons from the oxidation of dihydroorotate from the FMN redox center in the PyrD type B subunit to the ultimate electron acceptor NAD(+). The chain is Dihydroorotate dehydrogenase B (NAD(+)), electron transfer subunit from Streptococcus mutans serotype c (strain ATCC 700610 / UA159).